A 278-amino-acid chain; its full sequence is Pantothenate synthetase (278 aa).

30 to 37 (MGGLHQGH) is a binding site for ATP. His37 (proton donor) is an active-site residue. Gln61 is a binding site for (R)-pantoate. Gln61 contributes to the beta-alanine binding site. 146–149 (GQKD) lines the ATP pocket. Gln152 contributes to the (R)-pantoate binding site. ATP is bound by residues Ile175 and 183 to 186 (MSTR).

Belongs to the pantothenate synthetase family. Homodimer.

It is found in the cytoplasm. It carries out the reaction (R)-pantoate + beta-alanine + ATP = (R)-pantothenate + AMP + diphosphate + H(+). It functions in the pathway cofactor biosynthesis; (R)-pantothenate biosynthesis; (R)-pantothenate from (R)-pantoate and beta-alanine: step 1/1. Its function is as follows. Catalyzes the condensation of pantoate with beta-alanine in an ATP-dependent reaction via a pantoyl-adenylate intermediate. In Ruthia magnifica subsp. Calyptogena magnifica, this protein is Pantothenate synthetase.